A 784-amino-acid chain; its full sequence is Probable phosphoketolase (784 aa).

The protein belongs to the XFP family. Thiamine diphosphate serves as cofactor.

The protein is Probable phosphoketolase of Rhodopseudomonas palustris (strain HaA2).